We begin with the raw amino-acid sequence, 395 residues long: 1-deoxy-D-xylulose 5-phosphate reductoisomerase (395 aa).

NADPH-binding residues include threonine 13, glycine 14, serine 15, isoleucine 16, lysine 40, and asparagine 127. Residue lysine 128 participates in 1-deoxy-D-xylulose 5-phosphate binding. An NADPH-binding site is contributed by glutamate 129. Aspartate 153 serves as a coordination point for Mn(2+). Residues serine 154, glutamate 155, serine 184, and histidine 207 each coordinate 1-deoxy-D-xylulose 5-phosphate. Glutamate 155 is a Mn(2+) binding site. An NADPH-binding site is contributed by glycine 213. Serine 220, asparagine 225, lysine 226, and glutamate 229 together coordinate 1-deoxy-D-xylulose 5-phosphate. Position 229 (glutamate 229) interacts with Mn(2+).

Belongs to the DXR family. Mg(2+) serves as cofactor. The cofactor is Mn(2+).

The catalysed reaction is 2-C-methyl-D-erythritol 4-phosphate + NADP(+) = 1-deoxy-D-xylulose 5-phosphate + NADPH + H(+). It participates in isoprenoid biosynthesis; isopentenyl diphosphate biosynthesis via DXP pathway; isopentenyl diphosphate from 1-deoxy-D-xylulose 5-phosphate: step 1/6. In terms of biological role, catalyzes the NADPH-dependent rearrangement and reduction of 1-deoxy-D-xylulose-5-phosphate (DXP) to 2-C-methyl-D-erythritol 4-phosphate (MEP). The chain is 1-deoxy-D-xylulose 5-phosphate reductoisomerase from Nitrosospira multiformis (strain ATCC 25196 / NCIMB 11849 / C 71).